A 339-amino-acid chain; its full sequence is D-erythrose-4-phosphate dehydrogenase (339 aa).

NAD(+) is bound by residues 12-13 (RI) and Arg-81. Substrate-binding positions include 154–156 (SCT), Arg-200, 213–214 (TK), and Arg-236. Cys-155 serves as the catalytic Nucleophile. Asn-318 contributes to the NAD(+) binding site.

It belongs to the glyceraldehyde-3-phosphate dehydrogenase family. Epd subfamily. As to quaternary structure, homotetramer.

It is found in the cytoplasm. It carries out the reaction D-erythrose 4-phosphate + NAD(+) + H2O = 4-phospho-D-erythronate + NADH + 2 H(+). It participates in cofactor biosynthesis; pyridoxine 5'-phosphate biosynthesis; pyridoxine 5'-phosphate from D-erythrose 4-phosphate: step 1/5. Its function is as follows. Catalyzes the NAD-dependent conversion of D-erythrose 4-phosphate to 4-phosphoerythronate. The polypeptide is D-erythrose-4-phosphate dehydrogenase (Escherichia fergusonii (strain ATCC 35469 / DSM 13698 / CCUG 18766 / IAM 14443 / JCM 21226 / LMG 7866 / NBRC 102419 / NCTC 12128 / CDC 0568-73)).